We begin with the raw amino-acid sequence, 190 residues long: C-type lectin domain family 5 member A (190 aa).

Over M1–H4 the chain is Cytoplasmic. A helical; Signal-anchor for type II membrane protein membrane pass occupies residues M5 to L25. The Extracellular portion of the chain corresponds to Y26–K190. 3 N-linked (GlcNAc...) asparagine glycosylation sites follow: N51, N146, and N153. The 107-residue stretch at H80–E186 folds into the C-type lectin domain. Intrachain disulfides connect C101–C185 and C163–C177.

As to quaternary structure, monomer. Homodimer. The majority of CLEC5A is expressed as a monomeric form on macrophages. Interacts with TYROBP/DAP12. The interaction with TYROBP is required for CLEC5 cell surface expression. Interacts with HCST/DAP10. Forms a CLEC5A/TYROBP/HCST trimolecular complex depending almost solely on TYROBP. N-glycosylated. Contains sialic acid residues. In terms of tissue distribution, strong expression in bone marrow cells and thioglycollate-induced neutrophils (at protein level). Expressed on granulocytes and monocytes from bone marrow and peripheral blood. Expressed in macrophage cell line J-774, but not in T-cell lines, B-cell lines, or mast cell lines.

The protein localises to the cell membrane. Functionally, functions as a positive regulator of osteoclastogenesis. Cell surface receptor that signals via TYROBP. Regulates inflammatory responses. The protein is C-type lectin domain family 5 member A (Clec5a) of Mus musculus (Mouse).